We begin with the raw amino-acid sequence, 83 residues long: Omega-agatoxin-Aa4b (83 aa).

An N-terminal signal peptide occupies residues 1-20 (MKLCMTLLITAIAVVTFVVA). The propeptide occupies 21-35 (TQEESAEFNEVEESR). Cystine bridges form between C39/C55, C47/C60, C54/C71, and C62/C69. S81 is modified (D-serine (Ser)).

This sequence belongs to the neurotoxin 02 (plectoxin) family. 03 (omega-agtx) subfamily. Post-translationally, the toxin with D-Ser (named omega-aga IVC) is 80-90 fold more potent than that with L-Ser (omega-aga IVB) against Cav2.1/CACNA1A (P-type) channels in rat cerebellar Purkinje neurons and is more resistant to proteases. The epimerization is done by the venom peptide isomerase heterodimer. In terms of tissue distribution, expressed by the venom gland.

The protein localises to the secreted. In terms of biological role, antagonist of voltage-gated Cav2.1/CACNA1A (P-type) calcium channels. Paralyzes insect by blocking neuromuscular transmission. The polypeptide is Omega-agatoxin-Aa4b (Agelenopsis aperta (North American funnel-web spider)).